Here is a 21-residue protein sequence, read N- to C-terminus: MICYNHQSSEPPTTXTCSEGQ.

Residues 1–21 (MICYNHQSSEPPTTXTCSEGQ) form a disordered region.

Contains 4 disulfide bonds. As to expression, expressed by the venom gland.

Its subcellular location is the secreted. Its function is as follows. Binds to muscle nicotinic acetylcholine receptor (nAChR) and inhibit acetylcholine from binding to the receptor, thereby impairing neuromuscular transmission. The polypeptide is Short neurotoxin E1 (Micrurus pyrrhocryptus (Coral snake)).